The following is a 407-amino-acid chain: NADH dehydrogenase [ubiquinone] 1 alpha subcomplex subunit 10, mitochondrial (407 aa).

A mitochondrion-targeting transit peptide spans 1–60 (MTAVFRVGLVRLVSRATQSPNLLQAQTNALPAAFQQRCSISGKTMRGGPRVPKAAPYPYK).

The protein belongs to the complex I NDUFA10 subunit family. As to quaternary structure, complex I is composed of 45 different subunits. This a component of the hydrophobic protein fraction. Forms a complex including sicily, ND-42 and Hsp83; the complex is necessary to chaperone ND-42 in the cytoplasm before mitochondrial import; the interaction between sicily and ND-42 is direct and occurs preferably between the unprocessed forms in the cytoplasm. It depends on FAD as a cofactor. In terms of tissue distribution, expressed in muscles (at protein level).

The protein resides in the mitochondrion matrix. It is found in the cytoplasm. In terms of biological role, accessory subunit of the mitochondrial membrane respiratory chain NADH dehydrogenase (Complex I), that is believed not to be involved in catalysis. Complex I functions in the transfer of electrons from NADH to the respiratory chain. The immediate electron acceptor for the enzyme is believed to be ubiquinone. The chain is NADH dehydrogenase [ubiquinone] 1 alpha subcomplex subunit 10, mitochondrial from Drosophila melanogaster (Fruit fly).